The following is a 209-amino-acid chain: ATP synthase subunit delta (209 aa).

Belongs to the ATPase delta chain family. F-type ATPases have 2 components, F(1) - the catalytic core - and F(0) - the membrane proton channel. F(1) has five subunits: alpha(3), beta(3), gamma(1), delta(1), epsilon(1). F(0) has three main subunits: a(1), b(2) and c(10-14). The alpha and beta chains form an alternating ring which encloses part of the gamma chain. F(1) is attached to F(0) by a central stalk formed by the gamma and epsilon chains, while a peripheral stalk is formed by the delta and b chains.

The protein localises to the cell inner membrane. In terms of biological role, f(1)F(0) ATP synthase produces ATP from ADP in the presence of a proton or sodium gradient. F-type ATPases consist of two structural domains, F(1) containing the extramembraneous catalytic core and F(0) containing the membrane proton channel, linked together by a central stalk and a peripheral stalk. During catalysis, ATP synthesis in the catalytic domain of F(1) is coupled via a rotary mechanism of the central stalk subunits to proton translocation. Its function is as follows. This protein is part of the stalk that links CF(0) to CF(1). It either transmits conformational changes from CF(0) to CF(1) or is implicated in proton conduction. This is ATP synthase subunit delta from Psychrobacter sp. (strain PRwf-1).